Here is an 878-residue protein sequence, read N- to C-terminus: Phosphoenolpyruvate carboxylase (878 aa).

Residues H140 and K545 contribute to the active site.

It belongs to the PEPCase type 1 family. Mg(2+) serves as cofactor.

It catalyses the reaction oxaloacetate + phosphate = phosphoenolpyruvate + hydrogencarbonate. Functionally, forms oxaloacetate, a four-carbon dicarboxylic acid source for the tricarboxylic acid cycle. This Pseudomonas syringae pv. syringae (strain B728a) protein is Phosphoenolpyruvate carboxylase.